A 458-amino-acid chain; its full sequence is Bifunctional protein GlmU (458 aa).

The segment at 1-229 (MTNYAIILAA…FNESLGVNDR (229 aa)) is pyrophosphorylase. Residues 8-11 (LAAG), lysine 22, glutamine 72, and 77-78 (GT) each bind UDP-N-acetyl-alpha-D-glucosamine. A Mg(2+)-binding site is contributed by aspartate 102. UDP-N-acetyl-alpha-D-glucosamine-binding residues include glycine 139, glutamate 154, asparagine 169, and asparagine 227. Asparagine 227 contributes to the Mg(2+) binding site. Positions 230–250 (VALATAESVMRRRINKAHMIN) are linker. Residues 251-458 (GVTFQNPDAT…AKRLPHYPQK (208 aa)) form an N-acetyltransferase region. Residues arginine 332 and lysine 350 each coordinate UDP-N-acetyl-alpha-D-glucosamine. The active-site Proton acceptor is the histidine 362. Residues tyrosine 365 and asparagine 376 each coordinate UDP-N-acetyl-alpha-D-glucosamine. Acetyl-CoA-binding positions include alanine 379, 385–386 (NY), serine 404, alanine 422, and arginine 439.

In the N-terminal section; belongs to the N-acetylglucosamine-1-phosphate uridyltransferase family. It in the C-terminal section; belongs to the transferase hexapeptide repeat family. Homotrimer. The cofactor is Mg(2+).

The protein resides in the cytoplasm. It carries out the reaction alpha-D-glucosamine 1-phosphate + acetyl-CoA = N-acetyl-alpha-D-glucosamine 1-phosphate + CoA + H(+). The catalysed reaction is N-acetyl-alpha-D-glucosamine 1-phosphate + UTP + H(+) = UDP-N-acetyl-alpha-D-glucosamine + diphosphate. It functions in the pathway nucleotide-sugar biosynthesis; UDP-N-acetyl-alpha-D-glucosamine biosynthesis; N-acetyl-alpha-D-glucosamine 1-phosphate from alpha-D-glucosamine 6-phosphate (route II): step 2/2. It participates in nucleotide-sugar biosynthesis; UDP-N-acetyl-alpha-D-glucosamine biosynthesis; UDP-N-acetyl-alpha-D-glucosamine from N-acetyl-alpha-D-glucosamine 1-phosphate: step 1/1. The protein operates within bacterial outer membrane biogenesis; LPS lipid A biosynthesis. Functionally, catalyzes the last two sequential reactions in the de novo biosynthetic pathway for UDP-N-acetylglucosamine (UDP-GlcNAc). The C-terminal domain catalyzes the transfer of acetyl group from acetyl coenzyme A to glucosamine-1-phosphate (GlcN-1-P) to produce N-acetylglucosamine-1-phosphate (GlcNAc-1-P), which is converted into UDP-GlcNAc by the transfer of uridine 5-monophosphate (from uridine 5-triphosphate), a reaction catalyzed by the N-terminal domain. This is Bifunctional protein GlmU from Streptococcus uberis (strain ATCC BAA-854 / 0140J).